The sequence spans 67 residues: Small ribosomal subunit protein eS17 (67 aa).

Belongs to the eukaryotic ribosomal protein eS17 family. In terms of assembly, part of the 30S ribosomal subunit.

This chain is Small ribosomal subunit protein eS17, found in Thermococcus kodakarensis (strain ATCC BAA-918 / JCM 12380 / KOD1) (Pyrococcus kodakaraensis (strain KOD1)).